A 270-amino-acid chain; its full sequence is Phosphatidylglycerol--prolipoprotein diacylglyceryl transferase (270 aa).

The next 4 membrane-spanning stretches (helical) occupy residues 19 to 39 (FPVYWYGIIIGTGVLLGLWLA), 56 to 76 (LVLIAVPIAILFARMYYVIFE), 92 to 112 (QGGLAIHGGLIGAVITGVLFA), and 116 to 136 (GVSFWKLADIAAPSILLGQAI). Residue R138 coordinates a 1,2-diacyl-sn-glycero-3-phospho-(1'-sn-glycerol). The next 3 helical transmembrane spans lie at 178-198 (HPTFLYESLWNFAGVILLLAL), 206-226 (GELFFTYLIWYSVGRFFVEGL), and 236-256 (LRIAQVMSIGLVVISIIFIIV).

Belongs to the Lgt family.

Its subcellular location is the cell membrane. The enzyme catalyses L-cysteinyl-[prolipoprotein] + a 1,2-diacyl-sn-glycero-3-phospho-(1'-sn-glycerol) = an S-1,2-diacyl-sn-glyceryl-L-cysteinyl-[prolipoprotein] + sn-glycerol 1-phosphate + H(+). It participates in protein modification; lipoprotein biosynthesis (diacylglyceryl transfer). Catalyzes the transfer of the diacylglyceryl group from phosphatidylglycerol to the sulfhydryl group of the N-terminal cysteine of a prolipoprotein, the first step in the formation of mature lipoproteins. The chain is Phosphatidylglycerol--prolipoprotein diacylglyceryl transferase from Bacillus cereus (strain B4264).